Reading from the N-terminus, the 460-residue chain is 3-isopropylmalate dehydratase large subunit (460 aa).

[4Fe-4S] cluster-binding residues include cysteine 338, cysteine 398, and cysteine 401.

Belongs to the aconitase/IPM isomerase family. LeuC type 1 subfamily. In terms of assembly, heterodimer of LeuC and LeuD. It depends on [4Fe-4S] cluster as a cofactor.

It carries out the reaction (2R,3S)-3-isopropylmalate = (2S)-2-isopropylmalate. It functions in the pathway amino-acid biosynthesis; L-leucine biosynthesis; L-leucine from 3-methyl-2-oxobutanoate: step 2/4. Catalyzes the isomerization between 2-isopropylmalate and 3-isopropylmalate, via the formation of 2-isopropylmaleate. The chain is 3-isopropylmalate dehydratase large subunit from Streptococcus thermophilus (strain CNRZ 1066).